The primary structure comprises 374 residues: Aminodeoxychorismate lyase (374 aa).

The protein belongs to the class-IV pyridoxal-phosphate-dependent aminotransferase family. Homodimer. Pyridoxal 5'-phosphate serves as cofactor.

Its subcellular location is the cytoplasm. The catalysed reaction is 4-amino-4-deoxychorismate = 4-aminobenzoate + pyruvate + H(+). The protein operates within cofactor biosynthesis; tetrahydrofolate biosynthesis; 4-aminobenzoate from chorismate: step 2/2. Functionally, converts 4-amino-4-deoxychorismate into 4-aminobenzoate (PABA) and pyruvate. This Saccharomyces cerevisiae (strain ATCC 204508 / S288c) (Baker's yeast) protein is Aminodeoxychorismate lyase (ABZ2).